We begin with the raw amino-acid sequence, 212 residues long: Thymidylate kinase (212 aa).

Residue 13–20 (GLEGAGKS) coordinates ATP.

Belongs to the thymidylate kinase family.

It carries out the reaction dTMP + ATP = dTDP + ADP. Functionally, phosphorylation of dTMP to form dTDP in both de novo and salvage pathways of dTTP synthesis. This chain is Thymidylate kinase, found in Legionella pneumophila (strain Corby).